The primary structure comprises 225 residues: 3-dehydroquinate dehydratase (225 aa).

Residues 30–32 and Arg62 contribute to the 3-dehydroquinate site; that span reads EWR. His118 acts as the Proton donor/acceptor in catalysis. The Schiff-base intermediate with substrate role is filled by Lys143. 3-dehydroquinate contacts are provided by Arg186, Ser205, and Gln209.

The protein belongs to the type-I 3-dehydroquinase family. As to quaternary structure, homodimer.

The catalysed reaction is 3-dehydroquinate = 3-dehydroshikimate + H2O. The protein operates within metabolic intermediate biosynthesis; chorismate biosynthesis; chorismate from D-erythrose 4-phosphate and phosphoenolpyruvate: step 3/7. Its function is as follows. Involved in the third step of the chorismate pathway, which leads to the biosynthesis of aromatic amino acids. Catalyzes the cis-dehydration of 3-dehydroquinate (DHQ) and introduces the first double bond of the aromatic ring to yield 3-dehydroshikimate. The polypeptide is 3-dehydroquinate dehydratase (Streptococcus thermophilus (strain ATCC BAA-250 / LMG 18311)).